Here is a 106-residue protein sequence, read N- to C-terminus: Large ribosomal subunit protein bL21 (106 aa).

It belongs to the bacterial ribosomal protein bL21 family. Part of the 50S ribosomal subunit. Contacts protein L20.

This protein binds to 23S rRNA in the presence of protein L20. The chain is Large ribosomal subunit protein bL21 from Xanthomonas oryzae pv. oryzae (strain MAFF 311018).